Here is a 522-residue protein sequence, read N- to C-terminus: N-acetylgalactosamine-6-sulfatase (522 aa).

Residues 1–26 form the signal peptide; that stretch reads MAAVVAATRWWQLLLVLSAAGMGASG. The interval 27–379 is catalytic domain; that stretch reads APQPPNILLL…PTLLQGRLMD (353 aa). 3 residues coordinate Ca(2+): aspartate 39, aspartate 40, and cysteine 79. The Nucleophile role is filled by cysteine 79. A 3-oxoalanine (Cys) modification is found at cysteine 79. The active site involves histidine 142. Asparagine 204 carries an N-linked (GlcNAc...) asparagine glycan. Ca(2+)-binding residues include aspartate 288 and asparagine 289. An intrachain disulfide couples cysteine 308 to cysteine 419. An N-linked (GlcNAc...) asparagine glycan is attached at asparagine 423. 2 disulfide bridges follow: cysteine 489–cysteine 518 and cysteine 501–cysteine 507.

Belongs to the sulfatase family. Homodimer. Ca(2+) is required as a cofactor. In terms of processing, the conversion to 3-oxoalanine (also known as C-formylglycine, FGly), of a serine or cysteine residue in prokaryotes and of a cysteine residue in eukaryotes, is critical for catalytic activity.

It localises to the lysosome. The catalysed reaction is Hydrolysis of the 6-sulfate groups of the N-acetyl-D-galactosamine 6-sulfate units of chondroitin sulfate and of the D-galactose 6-sulfate units of keratan sulfate.. The protein is N-acetylgalactosamine-6-sulfatase (GALNS) of Homo sapiens (Human).